Consider the following 247-residue polypeptide: Adenosylcobinamide-GDP ribazoletransferase (247 aa).

The next 5 helical transmembrane spans lie at 34-54 (IVMF…IFIL), 59-79 (CGIP…TGGF), 113-133 (GGLA…ELAL), 138-158 (MLAA…LLMY), and 187-207 (LAVI…AMVV).

The protein belongs to the CobS family. Mg(2+) serves as cofactor.

It localises to the cell inner membrane. The enzyme catalyses alpha-ribazole + adenosylcob(III)inamide-GDP = adenosylcob(III)alamin + GMP + H(+). It carries out the reaction alpha-ribazole 5'-phosphate + adenosylcob(III)inamide-GDP = adenosylcob(III)alamin 5'-phosphate + GMP + H(+). The protein operates within cofactor biosynthesis; adenosylcobalamin biosynthesis; adenosylcobalamin from cob(II)yrinate a,c-diamide: step 7/7. Functionally, joins adenosylcobinamide-GDP and alpha-ribazole to generate adenosylcobalamin (Ado-cobalamin). Also synthesizes adenosylcobalamin 5'-phosphate from adenosylcobinamide-GDP and alpha-ribazole 5'-phosphate. This is Adenosylcobinamide-GDP ribazoletransferase from Salmonella choleraesuis (strain SC-B67).